A 206-amino-acid chain; its full sequence is Na(+)-translocating NADH-quinone reductase subunit E (206 aa).

Transmembrane regions (helical) follow at residues 12–32 (AVFVENMALAFFLGMCTFIAI), 36–56 (IQTAIGLGIAVVVVLAITVPV), 85–105 (FLGLLSYIGVIAAIVQILEMT), 118–138 (GIFLPLITVNCAIMGASLFMV), 148–168 (VVYGVGAGVGWALAITLLAGI), and 184–204 (LGITFITVGLMSLGFMSFSGV).

This sequence belongs to the NqrDE/RnfAE family. As to quaternary structure, composed of six subunits; NqrA, NqrB, NqrC, NqrD, NqrE and NqrF.

The protein localises to the cell inner membrane. The catalysed reaction is a ubiquinone + n Na(+)(in) + NADH + H(+) = a ubiquinol + n Na(+)(out) + NAD(+). Functionally, NQR complex catalyzes the reduction of ubiquinone-1 to ubiquinol by two successive reactions, coupled with the transport of Na(+) ions from the cytoplasm to the periplasm. NqrA to NqrE are probably involved in the second step, the conversion of ubisemiquinone to ubiquinol. The chain is Na(+)-translocating NADH-quinone reductase subunit E from Alcanivorax borkumensis (strain ATCC 700651 / DSM 11573 / NCIMB 13689 / SK2).